Consider the following 263-residue polypeptide: Oxidoreductase UcpA (263 aa).

Position 10–32 (10–32 (LITGALQGIGEGIARTFARHGAN)) interacts with NAD(+). Substrate is bound at residue serine 141. Tyrosine 155 serves as the catalytic Proton acceptor.

The protein belongs to the short-chain dehydrogenases/reductases (SDR) family.

The sequence is that of Oxidoreductase UcpA (ucpA) from Escherichia coli O157:H7.